Here is a 658-residue protein sequence, read N- to C-terminus: MPLFDLKSPYSLAGDQPQAIDTLTKSLKNKNHYQTLVGVTGSGKTYTMANIIAQTNKPTLIMSHNKTLCAQLYSEFKAFFPHNRVEYFISHFDYYQPESYIPRRDLFIEKDSSINDDLERLRLSATTSLLGYDDVIVIASVSANYGLGNPEEYLKVMEKIKVGEKRAYKSFLLKLVEMGYSRNEVVFDRGSFRAMGECVDIFPAYNDAEFIRIEFFGDEIERIAVFDALERNEIKRLDSVMLYAASQFAVGSERLNLAIKSIEDELALRLKFFKEQDKILEYNRLKQRTEHDLEMISATGVCKGIENYARHFTGKAPNETPFCLFDYLGIFEREFLVIVDESHVSLPQFGGMYAGDMSRKSVLVEYGFRLPSALDNRPLKFDEFIHKNCQFLFVSATPNKLELELSKKNVAEQIIRPTGLLDPKFEVRDSDKQVQDLFDEIKLVVARDERVLITTLTKKMAEELCKYYAEWGLKVRYMHSEIDAIERNHIIRSLRLKEFDVLIGINLLREGLDLPEVSLVAIMDADKEGFLRSETSLIQTMGRAARNANGKVLLYAKKITQSMQKAFETTTYRRAKQEEFNKLHNITPKTVTRALEEELKLRDDETKIAKALKKDKIPKSEREKIIKELDKKMRECAKNLDFEEAMHLRDEIAKLRTL.

The 154-residue stretch at 25–178 folds into the Helicase ATP-binding domain; it reads KSLKNKNHYQ…KSFLLKLVEM (154 aa). Residue 38–45 participates in ATP binding; that stretch reads GVTGSGKT. The Beta-hairpin signature appears at 91–114; it reads HFDYYQPESYIPRRDLFIEKDSSI. Positions 433-607 constitute a Helicase C-terminal domain; sequence QVQDLFDEIK…ELKLRDDETK (175 aa). The region spanning 623 to 658 is the UVR domain; the sequence is EKIIKELDKKMRECAKNLDFEEAMHLRDEIAKLRTL.

Belongs to the UvrB family. Forms a heterotetramer with UvrA during the search for lesions. Interacts with UvrC in an incision complex.

The protein localises to the cytoplasm. Its function is as follows. The UvrABC repair system catalyzes the recognition and processing of DNA lesions. A damage recognition complex composed of 2 UvrA and 2 UvrB subunits scans DNA for abnormalities. Upon binding of the UvrA(2)B(2) complex to a putative damaged site, the DNA wraps around one UvrB monomer. DNA wrap is dependent on ATP binding by UvrB and probably causes local melting of the DNA helix, facilitating insertion of UvrB beta-hairpin between the DNA strands. Then UvrB probes one DNA strand for the presence of a lesion. If a lesion is found the UvrA subunits dissociate and the UvrB-DNA preincision complex is formed. This complex is subsequently bound by UvrC and the second UvrB is released. If no lesion is found, the DNA wraps around the other UvrB subunit that will check the other stand for damage. The protein is UvrABC system protein B of Helicobacter acinonychis (strain Sheeba).